A 201-amino-acid chain; its full sequence is Small ribosomal subunit protein uS4 (201 aa).

Residues 1 to 42 are disordered; sequence MARYTGPATRKSRRLGVDLVGGDQSFEKRPYPPGQHGRARIK. In terms of domain architecture, S4 RNA-binding spans 91-157; the sequence is SRLDNVVYRA…LPFQIARETA (67 aa).

This sequence belongs to the universal ribosomal protein uS4 family. In terms of assembly, part of the 30S ribosomal subunit. Contacts protein S5. The interaction surface between S4 and S5 is involved in control of translational fidelity.

Functionally, one of the primary rRNA binding proteins, it binds directly to 16S rRNA where it nucleates assembly of the body of the 30S subunit. Its function is as follows. With S5 and S12 plays an important role in translational accuracy. This Mycolicibacterium smegmatis (strain ATCC 700084 / mc(2)155) (Mycobacterium smegmatis) protein is Small ribosomal subunit protein uS4.